A 226-amino-acid polypeptide reads, in one-letter code: Sugar fermentation stimulation protein homolog (226 aa).

This sequence belongs to the SfsA family.

This is Sugar fermentation stimulation protein homolog from Ruminiclostridium cellulolyticum (strain ATCC 35319 / DSM 5812 / JCM 6584 / H10) (Clostridium cellulolyticum).